Reading from the N-terminus, the 290-residue chain is Large ribosomal subunit protein uL3 (290 aa).

An N5-methylglutamine modification is found at Gln152. Positions 250 to 290 are disordered; that stretch reads ARLAEEQAAAEAESLAQAEAEIAAEGSDAAPEGDADKKDGE. A compositionally biased stretch (low complexity) spans 255-274; that stretch reads EQAAAEAESLAQAEAEIAAE.

The protein belongs to the universal ribosomal protein uL3 family. As to quaternary structure, part of the 50S ribosomal subunit. Forms a cluster with proteins L14 and L19. In terms of processing, methylated by PrmB.

One of the primary rRNA binding proteins, it binds directly near the 3'-end of the 23S rRNA, where it nucleates assembly of the 50S subunit. The protein is Large ribosomal subunit protein uL3 of Jannaschia sp. (strain CCS1).